The primary structure comprises 409 residues: Homoserine O-succinyltransferase (409 aa).

An AB hydrolase-1 domain is found at 43–380; the sequence is NAIVVCHALN…PHGHDAFLLD (338 aa). The active-site Nucleophile is the S149. R219 provides a ligand contact to substrate. A disordered region spans residues 244-268; sequence TLPAARGSLPPEGTDPTRGGPASDR. Residues D341 and H374 contribute to the active site. D375 provides a ligand contact to substrate.

This sequence belongs to the AB hydrolase superfamily. MetX family. Homodimer.

The protein resides in the cytoplasm. It carries out the reaction L-homoserine + succinyl-CoA = O-succinyl-L-homoserine + CoA. The protein operates within amino-acid biosynthesis; L-methionine biosynthesis via de novo pathway; O-succinyl-L-homoserine from L-homoserine: step 1/1. In terms of biological role, transfers a succinyl group from succinyl-CoA to L-homoserine, forming succinyl-L-homoserine. This chain is Homoserine O-succinyltransferase, found in Comamonas testosteroni (strain DSM 14576 / KF-1) (Pseudomonas testosteroni).